The chain runs to 511 residues: Sulfate adenylyltransferase (511 aa).

The interval 1-167 is N-terminal; sequence MPAPHGGILQ…LEAIQLPQHY (167 aa). The catalytic stretch occupies residues 168 to 393; sequence DYPGLRKTPA…LRESNPPRPK (226 aa). Glutamine 195 contacts sulfate. ATP contacts are provided by residues 195–198 and 289–292; these read QTRN and GRDH. Catalysis depends on residues threonine 196, arginine 197, and asparagine 198. Arginine 197 contacts sulfate. Alanine 293 is a sulfate binding site. Position 331 (valine 331) interacts with ATP. The tract at residues 394–511 is required for oligomerization; adenylyl-sulfate kinase-like; it reads QGFSIVLGNS…FLEDNGFFVF (118 aa).

It belongs to the sulfate adenylyltransferase family. As to quaternary structure, homohexamer. Dimer of trimers.

The protein resides in the cytoplasm. The enzyme catalyses sulfate + ATP + H(+) = adenosine 5'-phosphosulfate + diphosphate. It participates in sulfur metabolism; hydrogen sulfide biosynthesis; sulfite from sulfate: step 1/3. Functionally, catalyzes the first intracellular reaction of sulfate assimilation, forming adenosine-5'-phosphosulfate (APS) from inorganic sulfate and ATP. Plays an important role in sulfate activation as a component of the biosynthesis pathway of sulfur-containing amino acids. This chain is Sulfate adenylyltransferase, found in Saccharomyces cerevisiae (strain ATCC 204508 / S288c) (Baker's yeast).